The sequence spans 617 residues: Protein fem-1 homolog C (617 aa).

At methionine 1 the chain carries N-acetylmethionine. ANK repeat units lie at residues 2-31 (DLKT…KEEV), 40-70 (NGAT…SIEV), 82-111 (EGAP…SVNN), 115-144 (TNST…DLEV), 148-177 (HGHT…DVNR), 181-210 (KGNT…KMEK), and 213-242 (YGMT…TSKT). TPR repeat units follow at residues 245–279 (INAL…RYSD) and 338–371 (SYYI…QQNN). 2 ANK repeats span residues 481–523 (NNFS…DVNV) and 527–556 (DDNS…HFDA).

Belongs to the fem-1 family. As to quaternary structure, component of a CRL2 E3 ubiquitin-protein ligase complex, also named ECS (Elongin BC-CUL2/5-SOCS-box protein) complex, composed of CUL2, Elongin BC (ELOB and ELOC), RBX1 and substrate-specific adapter FEM1C.

It functions in the pathway protein modification; protein ubiquitination. Its function is as follows. Substrate-recognition component of a Cul2-RING (CRL2) E3 ubiquitin-protein ligase complex of the DesCEND (destruction via C-end degrons) pathway, which recognizes a C-degron located at the extreme C terminus of target proteins, leading to their ubiquitination and degradation. The C-degron recognized by the DesCEND pathway is usually a motif of less than ten residues and can be present in full-length proteins, truncated proteins or proteolytically cleaved forms. The CRL2(FEM1C) complex specifically recognizes proteins with an arginine at the C-terminus: recognizes and binds proteins ending with -Lys/Arg-Xaa-Arg and -Lys/Arg-Xaa-Xaa-Arg C-degrons, such as SIL1 or OR51B2, leading to their ubiquitination and degradation. The CRL2(FEM1C) complex mediates ubiquitination and degradation of truncated MSRB1/SEPX1 selenoproteins produced by failed UGA/Sec decoding. This is Protein fem-1 homolog C from Bos taurus (Bovine).